A 1020-amino-acid polypeptide reads, in one-letter code: X-linked retinitis pigmentosa GTPase regulator (1020 aa).

6 RCC1 repeats span residues 54 to 105 (NKLY…STEG), 106 to 158 (GNVY…LTED), 159 to 208 (GRLF…VTTD), 209 to 261 (GELY…LTEN), 262 to 313 (AVYT…ITDI), and 314 to 367 (GLMY…FAAP). A phosphoserine mark is found at Ser-418 and Ser-518. Disordered stretches follow at residues 609 to 776 (HENN…IISK), 790 to 906 (EIPE…KEKA), and 989 to 1020 (DNKD…CTIL). Basic and acidic residues-rich tracts occupy residues 618–636 (LDAK…QKES), 644–665 (EKET…EKST), 685–698 (EENK…ESCK), 704–715 (DSERESVEKPDS), 760–771 (KLIEQGNEKETK), 790–802 (EIPE…EDSK), 816–853 (ENVK…LKLE), and 883–906 (SKTE…KEKA). Residues 996-1009 (NHMSQNHQNIPPTN) show a composition bias toward polar residues. Cys-1017 is subject to Cysteine methyl ester. Cys-1017 carries the S-geranylgeranyl cysteine lipid modification. The propeptide at 1018–1020 (TIL) is removed in mature form.

Interacts with SPATA7. Interacts with CEP290. Interacts with WHRN. Interacts with PDE6D. Interacts with RPGRIP1. Interacts with RPGRIP1L. PDE6D, RPGRIP1 and RPGRIP1L may compete for the same binding sites. Interacts with RAB37 and RAB8A (in GDP-bound forms); functions as GEF for RAB37 and RAB8A. In terms of assembly, isoform 6 interacts with NPM1 (via C-terminus). Isoform 6 interacts with SMC1A and SMC3. In terms of processing, prenylated. In terms of tissue distribution, heart, brain, placenta, lung, liver, muscle, kidney, retina, pancreas and fetal retinal pigment epithelium. Isoform 3 is found only in the retina. Colocalizes with RPGRIP1 in the outer segment of rod photoreceptors and cone outer segments.

The protein localises to the cytoplasm. It localises to the cytoskeleton. Its subcellular location is the flagellum axoneme. The protein resides in the golgi apparatus. It is found in the cell projection. The protein localises to the cilium. It localises to the microtubule organizing center. Its subcellular location is the centrosome. The protein resides in the cilium basal body. It is found in the cilium axoneme. In terms of biological role, acts as a guanine-nucleotide releasing factor (GEF) for RAB8A and RAB37 by promoting the conversion of inactive RAB-GDP to the active form RAB-GTP. GEF activity towards RAB8A may facilitate ciliary trafficking by modulating ciliary intracellular localization of RAB8A. GEF activity towards RAB37 maintains autophagic homeostasis and retinal function. Involved in photoreceptor integrity. May control cilia formation by regulating actin stress filaments and cell contractility. May be involved in microtubule organization and regulation of transport in primary cilia. May play a critical role in spermatogenesis and in intraflagellar transport processes. In Homo sapiens (Human), this protein is X-linked retinitis pigmentosa GTPase regulator.